A 327-amino-acid polypeptide reads, in one-letter code: D-alanine--D-alanine ligase (327 aa).

The ATP-grasp domain occupies 113–312 (KRLWMTHGLA…YEDFVMQVLA (200 aa)). 139 to 194 (VADLGLPLIVKPAREGSSIGLTKVIAADQMRAAFEKAAGLDADVIAETFIDGAELT) contributes to the ATP binding site. Asp-266, Glu-279, and Asn-281 together coordinate Mg(2+).

The protein belongs to the D-alanine--D-alanine ligase family. Mg(2+) is required as a cofactor. It depends on Mn(2+) as a cofactor.

It localises to the cytoplasm. The catalysed reaction is 2 D-alanine + ATP = D-alanyl-D-alanine + ADP + phosphate + H(+). Its pathway is cell wall biogenesis; peptidoglycan biosynthesis. Functionally, cell wall formation. The protein is D-alanine--D-alanine ligase of Cupriavidus metallidurans (strain ATCC 43123 / DSM 2839 / NBRC 102507 / CH34) (Ralstonia metallidurans).